The primary structure comprises 139 residues: MAKVPRNFKLLEELEKGEKGLGESSCSYGLTNADDITLSDWNATILGPAHSVHENRIYSLKIHCDANYPDAPPIVTFVSRINLPGVDGETGKVNPHKIDCLRHWKREYSMETVLLDLKKEMASSSNRKLPQPPEGSTFF.

Residues 5–139 (PRNFKLLEEL…PQPPEGSTFF (135 aa)) enclose the UBC core domain.

Belongs to the ubiquitin-conjugating enzyme family. As to quaternary structure, heterodimer with ubc13.

In terms of biological role, has a role in the DNA error-free postreplication repair (PRR) pathway. Lacks catalytic activity by itself. The ubc13/spm2 heterodimer catalyzes the synthesis of non-canonical poly-ubiquitin chains that are linked through 'Lys-63'. This chain is Ubiquitin-conjugating enzyme spm2 (spm2), found in Schizosaccharomyces pombe (strain 972 / ATCC 24843) (Fission yeast).